A 781-amino-acid chain; its full sequence is AP-3 complex subunit beta (781 aa).

HEAT repeat units follow at residues 113 to 151, 153 to 186, 187 to 224, 294 to 332, and 521 to 559; these read PNLA…ASLY, IILH…EQGI, SIKD…QELQ, DHDL…PKTF, and PRIC…HDVD. Disordered regions lie at residues 694–713 and 731–781; these read KPKR…TSSH and ARQS…ETTE. The segment covering 699-712 has biased composition (polar residues); sequence ASVSSVPSNTFTSS. A compositionally biased stretch (acidic residues) spans 746 to 758; sequence STSEETDHTDDES. Residues 759–774 show a composition bias toward low complexity; the sequence is GSSSGDESTESSYVSS.

The protein belongs to the adaptor complexes large subunit family. In terms of assembly, adaptor protein complex 3 (AP-3) is a heterotetramer composed of 2 large adaptins (APL5 and APL6), a medium adaptin (APM3) and a small adaptin (APS3).

The protein localises to the golgi apparatus. The protein resides in the cytoplasmic vesicle. It localises to the clathrin-coated vesicle membrane. In terms of biological role, part of the AP-3 complex, an adaptor-related complex which is not clathrin-associated. The complex is associated with the Golgi region as well as more peripheral structures. It facilitates the budding of vesicles from the Golgi membrane and may be directly involved in trafficking to the vacuole. The sequence is that of AP-3 complex subunit beta (APL6) from Eremothecium gossypii (strain ATCC 10895 / CBS 109.51 / FGSC 9923 / NRRL Y-1056) (Yeast).